Reading from the N-terminus, the 393-residue chain is Digeranylgeranylglycerophospholipid reductase (393 aa).

Positions 13, 32, 43, 44, 46, 95, 119, 274, and 286 each coordinate FAD. The a 2,3-bis-O-(geranylgeranyl)-sn-glycerol 1-phospholipid site is built by Arg-327 and Gly-363.

It belongs to the geranylgeranyl reductase family. DGGGPL reductase subfamily. Requires FAD as cofactor.

The catalysed reaction is a 2,3-bis-O-phytanyl-sn-glycerol 1-phospholipid + 8 A = a 2,3-bis-O-(geranylgeranyl)-sn-glycerol 1-phospholipid + 8 AH2. It catalyses the reaction 2,3-bis-O-(phytanyl)-sn-glycerol 1-phosphate + 8 A = 2,3-bis-O-(geranylgeranyl)-sn-glycerol 1-phosphate + 8 AH2. The enzyme catalyses CDP-2,3-bis-O-(geranylgeranyl)-sn-glycerol + 8 AH2 = CDP-2,3-bis-O-(phytanyl)-sn-glycerol + 8 A. It carries out the reaction archaetidylserine + 8 AH2 = 2,3-bis-O-phytanyl-sn-glycero-3-phospho-L-serine + 8 A. It participates in membrane lipid metabolism; glycerophospholipid metabolism. Its function is as follows. Is involved in the reduction of 2,3-digeranylgeranylglycerophospholipids (unsaturated archaeols) into 2,3-diphytanylglycerophospholipids (saturated archaeols) in the biosynthesis of archaeal membrane lipids. Catalyzes the formation of archaetidic acid (2,3-di-O-phytanyl-sn-glyceryl phosphate) from 2,3-di-O-geranylgeranylglyceryl phosphate (DGGGP) via the hydrogenation of each double bond of the isoprenoid chains. Is also probably able to reduce double bonds of geranyl groups in CDP-2,3-bis-O-(geranylgeranyl)-sn-glycerol and archaetidylserine, thus acting at various stages in the biosynthesis of archaeal membrane lipids. The chain is Digeranylgeranylglycerophospholipid reductase from Pyrococcus horikoshii (strain ATCC 700860 / DSM 12428 / JCM 9974 / NBRC 100139 / OT-3).